The chain runs to 441 residues: Maltose-6'-phosphate glucosidase MalH (441 aa).

4–70 contributes to the NAD(+) binding site; sequence FSVVIAGGGS…PEIEFLATTN (67 aa). Residues Arg93 and Asn147 each contribute to the substrate site. A Mn(2+)-binding site is contributed by Cys169. Asp170 serves as the catalytic Proton donor. Mn(2+) is bound at residue His200. The active-site Proton acceptor is the Tyr264. Arg284 serves as a coordination point for substrate.

In terms of assembly, homotetramer. Requires NAD(+) as cofactor. The cofactor is Mn(2+).

The enzyme catalyses alpha-maltose 6'-phosphate + H2O = D-glucose 6-phosphate + D-glucose. Functionally, catalyzes the hydrolysis of O-alpha-linked disaccharide 6-phosphates, including maltose-6'P and all five phosphorylated isomers of sucrose, but not sucrose-6P. Does not hydrolyze beta-linked disaccharide 6-phosphates such as cellobiose-6'P and gentiobiose-6'P. Is involved in the dissimilation of maltose and related O-alpha-linked glucosides produced via the phosphoenolpyruvate-dependent sugar phosphotransferase system (PEP-PTS). The chain is Maltose-6'-phosphate glucosidase MalH (malH) from Clostridium acetobutylicum (strain ATCC 824 / DSM 792 / JCM 1419 / IAM 19013 / LMG 5710 / NBRC 13948 / NRRL B-527 / VKM B-1787 / 2291 / W).